We begin with the raw amino-acid sequence, 383 residues long: Protein delta homolog 1 (383 aa).

The first 23 residues, 1 to 23 (MIATGALLRVLLLLLAFGHSTYG), serve as a signal peptide directing secretion. EGF-like domains follow at residues 24–55 (AECD…PLCE), 59–86 (TSPG…KFCE), 88–125 (DIRA…KDCQ), 127–168 (KAGP…NFCE), 170–206 (VTNS…KTCS), and 208–245 (PVSN…PTCA). Topologically, residues 24 to 306 (AECDPACDPQ…PLLTEGQAIC (283 aa)) are extracellular. Disulfide bonds link Cys-26-Cys-37, Cys-30-Cys-43, Cys-45-Cys-54, Cys-63-Cys-68, Cys-76-Cys-85, Cys-92-Cys-103, Cys-97-Cys-113, Cys-115-Cys-124, Cys-131-Cys-144, Cys-138-Cys-156, Cys-158-Cys-167, Cys-174-Cys-185, Cys-179-Cys-194, Cys-196-Cys-205, Cys-212-Cys-223, Cys-217-Cys-233, and Cys-235-Cys-244. The helical transmembrane segment at 307 to 327 (FTILGVLTSLVVLGTVAIVFL) threads the bilayer. At 328-383 (NKCEAWVSNLRYNHMLRKKKNLLLQYNSGEELAVNIIFPEKIDMTTFNKEAGDEDI) the chain is on the cytoplasmic side.

Monomer. Interacts with SH3RF2. In terms of processing, glycosylated. Pancreas and adrenal glands (at protein level).

It localises to the membrane. The protein resides in the cytoplasm. Its function is as follows. May have a role in neuroendocrine differentiation. Inhibits adipocyte differentiation. The sequence is that of Protein delta homolog 1 (Dlk1) from Rattus norvegicus (Rat).